The following is a 198-amino-acid chain: HTH-type transcriptional regulator BetI (198 aa).

Positions 8-68 (PLRRRELIDA…ATMRHLLREL (61 aa)) constitute an HTH tetR-type domain. Positions 31 to 50 (TVAQIAHEAGVSPALAHHYF) form a DNA-binding region, H-T-H motif.

The protein operates within amine and polyamine biosynthesis; betaine biosynthesis via choline pathway [regulation]. In terms of biological role, repressor involved in the biosynthesis of the osmoprotectant glycine betaine. It represses transcription of the choline transporter BetT and the genes of BetAB involved in the synthesis of glycine betaine. The sequence is that of HTH-type transcriptional regulator BetI from Brucella suis biovar 1 (strain 1330).